Consider the following 1400-residue polypeptide: DNA-directed RNA polymerase subunit beta' (1400 aa).

Zn(2+) contacts are provided by Cys71, Cys73, Cys86, and Cys89. Mg(2+)-binding residues include Asp462, Asp464, and Asp466. Cys810, Cys884, Cys891, and Cys894 together coordinate Zn(2+).

The protein belongs to the RNA polymerase beta' chain family. The RNAP catalytic core consists of 2 alpha, 1 beta, 1 beta' and 1 omega subunit. When a sigma factor is associated with the core the holoenzyme is formed, which can initiate transcription. The cofactor is Mg(2+). Zn(2+) is required as a cofactor.

The enzyme catalyses RNA(n) + a ribonucleoside 5'-triphosphate = RNA(n+1) + diphosphate. Functionally, DNA-dependent RNA polymerase catalyzes the transcription of DNA into RNA using the four ribonucleoside triphosphates as substrates. The sequence is that of DNA-directed RNA polymerase subunit beta' from Rhodopseudomonas palustris (strain TIE-1).